Reading from the N-terminus, the 453-residue chain is Lipase 9 (453 aa).

The first 14 residues, 1–14, serve as a signal peptide directing secretion; the sequence is MLYLILFLIAPIYA. The N-linked (GlcNAc...) asparagine glycan is linked to Asn36. Residues Cys110 and Cys281 are joined by a disulfide bond. Ser194 serves as the catalytic Charge relay system. N-linked (GlcNAc...) asparagine glycans are attached at residues Asn229, Asn266, and Asn269. Catalysis depends on charge relay system residues Asp343 and His376. Residues Cys359 and Cys404 are joined by a disulfide bond. N-linked (GlcNAc...) asparagine glycosylation occurs at Asn417.

Belongs to the AB hydrolase superfamily. Lipase family. Class Lip subfamily.

The protein resides in the secreted. It carries out the reaction a triacylglycerol + H2O = a diacylglycerol + a fatty acid + H(+). Its function is as follows. Secreted lipase that is able to hydrolyze both the neutral triacylglycerols and the monopalmitate ester Tween 40, allowing the use of hydrolyzed products as carbon sources. Has broad lipolytic activity, which may be important for colonization and subsequent infection, therefore contributing to the persistence and virulence in human tissue. This Candida albicans (strain SC5314 / ATCC MYA-2876) (Yeast) protein is Lipase 9.